The sequence spans 214 residues: pH-sensitive calcium channel (214 aa).

The Cytoplasmic segment spans residues Met-1 to Arg-15. The chain crosses the membrane as a helical span at residues Ile-16–Val-37. The Extracellular segment spans residues Pro-38–Pro-44. Residues Leu-45–Met-59 traverse the membrane as a helical segment. Topologically, residues Arg-60 to Gly-66 are cytoplasmic. Residues Tyr-67 to Ser-86 traverse the membrane as a helical segment. Topologically, residues His-87–Tyr-95 are extracellular. A helical transmembrane segment spans residues Val-96–Lys-117. At Met-118–Leu-122 the chain is on the cytoplasmic side. The chain crosses the membrane as a helical span at residues Ser-123–Ser-146. Residues Pro-147–Ala-151 are Extracellular-facing. Residues Ala-152–Ile-175 form a helical membrane-spanning segment. Topologically, residues Lys-176–Ile-185 are cytoplasmic. Residues Pro-186–Phe-207 traverse the membrane as a helical segment. The Extracellular portion of the chain corresponds to Gly-208 to Asp-214.

Belongs to the BI1 family. In terms of assembly, monomer.

It localises to the cell membrane. It carries out the reaction Ca(2+)(in) = Ca(2+)(out). With respect to regulation, the calcium-release activity is mediated by two factors: pH and transmembrane ion gradient. It was proposed, based on an MD simulation, that the conserved aspartyl dyad (Asp-171-Asp-195) regulates Ca(2+) binding, pH sensing, and the channel pore opening and closing, and that protonation of Asp-171 probably weakens its interaction with Arg-60, facilitating the opening of the channel. Another study using nanodiscs suggests that Asp-171 is not a pH sensor regulating the pore dynamics; instead, it is only involved in the gating of calcium ions. When crystallized in detergents at different pH conditions, the transition between open and closed conformations is regulated by pH. Ca(2+) binding is inhibited by Na(+), K(+), Li(+), Yb(3+) and Lu(3+), but not by Mg(2+) and Mn(2+). Functionally, calcium channel that probably plays a role in the regulation of calcium homeostasis. Uptakes calcium ions and mediates calcium flux in proteoliposomes in a pH-dependent manner. When expressed in E.coli in the presence of high extracellular calcium concentrations, shows calcium-leak activity, increasing intracellular calcium concentration. It can also mediate Ca(2+) flux from the endoplamic reticulum (ER) when expressed in permeabilized mammalian cells. Calcium transport activity is also detected in ER-like lipid vesicles. This Bacillus subtilis (strain 168) protein is pH-sensitive calcium channel.